The following is a 2571-amino-acid chain: Highly reducing polyketide synthase 19 (2571 aa).

Residues 1–51 (MSPIFLGDSEDAATCRCGPPSSPSPELSGTETALTSDSDGPELLNPGPQGP) form a disordered region. The span at 27–38 (LSGTETALTSDS) shows a compositional bias: polar residues. In terms of domain architecture, Ketosynthase family 3 (KS3) spans 51-485 (PEPIAIIGMG…GANAHCILES (435 aa)). Catalysis depends on for beta-ketoacyl synthase activity residues cysteine 224, histidine 359, and histidine 398. The interval 609–932 (VFTGQGAQWA…PYNSALLRGK (324 aa)) is malonyl-CoA:ACP transacylase (MAT) domain. Serine 701 (for malonyltransferase activity) is an active-site residue. The N-terminal hotdog fold stretch occupies residues 1019 to 1163 (HDLLGSRVPG…GLVKLTQNED (145 aa)). Positions 1019 to 1340 (HDLLGSRVPG…SGCRMVPYSS (322 aa)) are dehydratase (DH) domain. The PKS/mFAS DH domain maps to 1019-1344 (HDLLGSRVPG…MVPYSSGTAV (326 aa)). The active-site Proton acceptor; for dehydratase activity is histidine 1051. Residues 1177 to 1344 (MEQSAPRTWY…MVPYSSGTAV (168 aa)) form a C-terminal hotdog fold region. Aspartate 1241 acts as the Proton donor; for dehydratase activity in catalysis. The segment at 1800 to 2140 (NMSDAFVFTR…AFRALSGSTT (341 aa)) is enoyl reductase (ER) domain. Positions 2177-2355 (SYLLVGCLGG…ATSVGLGMIS (179 aa)) are ketoreductase (KR) domain. The Carrier domain occupies 2490–2568 (AVAAQALELV…MLSELIAGKL (79 aa)). The residue at position 2527 (serine 2527) is an O-(pantetheine 4'-phosphoryl)serine.

Its pathway is polyketide biosynthesis. Functionally, highly reducing polyketide synthase; part of the gene cluster that mediates the biosynthesis of pyriculol and pyriculariol, two heptaketides that induce lesion formation upon application on rice leaves but are dispensable for pathogenicity. The highly reducing polyketide synthase synthesizes the heptaketide backbone of pyriculol and pyriculariol. Pyriculol and pyriculariol contain several hydroxyl moieties and double bonds, so it can be assumed that several reduction steps occur during biosynthesis. These reactions could be executed by PKS19 itself or partly by the tailoring enzymes OXR1, PXR2, RED1, RED2 or RED3, identified within the cluster. The FAD-linked oxidoreductase OXR1 is the only tailoring enzyme for which the function has been determined yet, and is involved in the oxidation of dihydropyriculol and dihydropyriculariol into pyriculol and pyriculariol, respectively. In Pyricularia oryzae (strain 70-15 / ATCC MYA-4617 / FGSC 8958) (Rice blast fungus), this protein is Highly reducing polyketide synthase 19.